The chain runs to 243 residues: MIPESHPRYKSLITREKLAQYTKTGIVSLEGLTAHGRGEAFDYLLGEETTESALRAEKIAAALLLSANHPVISVNGNTAALAAKEIAQLQLASKARVEVNLFHRTDERVQAISGLLKEHGITLVEGTVSRYIPLDHDRGLCHFDGMHSADVVLVPLEDGDRAQALIDLGKKVIAIDLNPLSRTSKVATVPVIDEVTRALANIARFCTELDQDEITGLTREIHGTGFIRDALEYIRERLLNVLD.

Residues Arg15, Arg37, 176-178 (DLN), and 182-183 (RT) contribute to the ATP site.

The protein belongs to the archaeal phosphopantothenate synthetase family. Homodimer.

The catalysed reaction is (R)-4-phosphopantoate + beta-alanine + ATP = (R)-4'-phosphopantothenate + AMP + diphosphate + H(+). Its pathway is cofactor biosynthesis; coenzyme A biosynthesis. Catalyzes the condensation of (R)-4-phosphopantoate and beta-alanine to 4'-phosphopantothenate in the CoA biosynthesis pathway. This Methanospirillum hungatei JF-1 (strain ATCC 27890 / DSM 864 / NBRC 100397 / JF-1) protein is 4-phosphopantoate--beta-alanine ligase.